The primary structure comprises 275 residues: F420-dependent methylenetetrahydromethanopterin dehydrogenase (275 aa).

The protein belongs to the MTD family.

The catalysed reaction is 5,10-methylenetetrahydromethanopterin + oxidized coenzyme F420-(gamma-L-Glu)(n) + 2 H(+) = 5,10-methenyl-5,6,7,8-tetrahydromethanopterin + reduced coenzyme F420-(gamma-L-Glu)(n). Its pathway is one-carbon metabolism; methanogenesis from CO(2); 5,10-methylene-5,6,7,8-tetrahydromethanopterin from 5,10-methenyl-5,6,7,8-tetrahydromethanopterin (coenzyme F420 route): step 1/1. Its function is as follows. Catalyzes the reversible reduction of methenyl-H(4)MPT(+) to methylene-H(4)MPT. The polypeptide is F420-dependent methylenetetrahydromethanopterin dehydrogenase (Methanobrevibacter smithii (strain ATCC 35061 / DSM 861 / OCM 144 / PS)).